An 802-amino-acid chain; its full sequence is Potassium channel AKT2/3 (802 aa).

The Cytoplasmic segment spans residues 1–79 (MDLKYSASHC…PMDSRYRCWE (79 aa)). Residues 80-100 (FYMVLLVAYSAWVYPFEVAFL) form a helical membrane-spanning segment. Topologically, residues 101 to 109 (NSSPKRNLC) are extracellular. Residues 110–130 (IADNIVDLFFAVDIVLTFFVA) form a helical membrane-spanning segment. Topologically, residues 131–153 (YIDERTQLLVREPKQIAVRYLST) are cytoplasmic. Residues 154–174 (WFLMDVASTIPFDAIGYLITG) traverse the membrane as a helical segment. Residues 175-183 (TSTLNITCN) are Extracellular-facing. N-linked (GlcNAc...) asparagine glycosylation occurs at N179. Residues 184–204 (LLGLLRFWRLRRVKHLFTRLE) form a helical; Voltage-sensor membrane-spanning segment. The Cytoplasmic segment spans residues 205–218 (KDIRYSYFWIRCFR). The helical transmembrane segment at 219–239 (LLSVTLFLVHCAGCSYYLIAD) threads the bilayer. At 240–265 (RYPHQGKTWTDAIPNFTETSLSIRYI) the chain is on the extracellular side. N-linked (GlcNAc...) asparagine glycosylation is present at N254. Residues 266-285 (AAIYWSITTMTTVGYGDLHA) constitute an intramembrane region (pore-forming). Topologically, residues 286–288 (SNT) are extracellular. A helical membrane pass occupies residues 289–309 (IEMVFITVYMLFNLGLTAYLI). The Cytoplasmic segment spans residues 310–802 (GNMTNLVVEG…KLYFVVNKII (493 aa)). 394 to 513 (LFKGVSREIL…ATMLKNFLQH (120 aa)) contacts a nucleoside 3',5'-cyclic phosphate. 5 ANK repeats span residues 540-569 (NIASNLIAVVTTGNAALLDELLKAKLSPDI), 573-602 (KGKTPLHVAASRGYEDCVLVLLKHGCNIHI), 606-636 (NGNSALWEAIISKHYEIFRILYHFAAISDPH), 637-666 (IAGDLLCEAAKQNNVEVMKALLKQGLNVDT), and 670-699 (HGVTALQVAMAEDQMDMVNLLATNGADVVC). The region spanning 725–802 (RVSIYRGHPL…KLYFVVNKII (78 aa)) is the KHA domain.

The protein belongs to the potassium channel family. Plant (TC 1.A.1.4) subfamily. As to quaternary structure, the potassium channel is probably composed of a homo- or heterotetrameric complex of pore-forming subunits. Interacts with the phosphatase PPC2A and the kinase CIPK6. May interact with AKT1, KAT1 and KAT3. Interacts with SLAC1. Dephosphorylated by PP2CA. In terms of tissue distribution, expressed mainly in the phloem tissues throughout the plant but also, at a lower level, in leaf epiderm, mesophyll and guard cells.

It localises to the endoplasmic reticulum membrane. Its function is as follows. Highly selective and weak inward-rectifying potassium channel. Plays a role in both loading and unloading potassium into/from the phloem sap. Seems to control sugar loading into phloem via a voltage-dependent process. Blocked by physiological concentrations of external calcium and by external acidification. May interact with the cytoskeleton or with regulatory proteins. Dephosphorylation by PP2CA not only leads to the inhibition of potassium currents but also to an increase of the voltage-dependence of the channel. Regulated by the CBL4/CIPK6 calcium sensor/protein kinase complex via a kinase interaction-dependent but phosphorylation-independent translocation of the channel to the plasma membrane. This is Potassium channel AKT2/3 (AKT2) from Arabidopsis thaliana (Mouse-ear cress).